Consider the following 345-residue polypeptide: Probable 1-aminocyclopropane-1-carboxylate deaminase (345 aa).

At Lys58 the chain carries N6-(pyridoxal phosphate)lysine. The active-site Nucleophile is Ser85.

Belongs to the ACC deaminase/D-cysteine desulfhydrase family. Requires pyridoxal 5'-phosphate as cofactor.

It carries out the reaction 1-aminocyclopropane-1-carboxylate + H2O = 2-oxobutanoate + NH4(+). Catalyzes a cyclopropane ring-opening reaction, the irreversible conversion of 1-aminocyclopropane-1-carboxylate (ACC) to ammonia and alpha-ketobutyrate. In Cryptococcus neoformans var. neoformans serotype D (strain JEC21 / ATCC MYA-565) (Filobasidiella neoformans), this protein is Probable 1-aminocyclopropane-1-carboxylate deaminase.